Reading from the N-terminus, the 101-residue chain is UPF0134 protein MPN_675 (101 aa).

It belongs to the UPF0134 family.

In Mycoplasma pneumoniae (strain ATCC 29342 / M129 / Subtype 1) (Mycoplasmoides pneumoniae), this protein is UPF0134 protein MPN_675.